Here is a 727-residue protein sequence, read N- to C-terminus: Glucans biosynthesis glucosyltransferase H (727 aa).

The disordered stretch occupies residues 18–38; that stretch reads SAMPNERPGAMEPQNLSKMPE. Helical transmembrane passes span 58–78, 97–117, 278–298, 408–428, 460–480, 496–516, and 572–592; these read FLVV…MGAV, VNFC…LILL, LQQF…GWWV, IMAY…LMLA, LFYI…LLLL, IFSV…MMFI, and LLAW…ISAW.

The protein belongs to the glycosyltransferase 2 family. OpgH subfamily.

The protein localises to the cell inner membrane. Its pathway is glycan metabolism; osmoregulated periplasmic glucan (OPG) biosynthesis. In terms of biological role, involved in the biosynthesis of osmoregulated periplasmic glucans (OPGs). This Shewanella baltica (strain OS223) protein is Glucans biosynthesis glucosyltransferase H.